Reading from the N-terminus, the 100-residue chain is Carboxysome shell vertex protein CcmL (100 aa).

Residues 1 to 83 (MQLAKVLGTV…LDAMVVGIID (83 aa)) form the BMV domain.

Belongs to the CcmL/EutN family. CcmL subfamily. As to quaternary structure, homopentamer. Interacts with full-length CcmM.

It is found in the carboxysome. In terms of biological role, probably forms vertices in the carboxysome, a polyhedral inclusion where RuBisCO (ribulose bisphosphate carboxylase, rbcL-rbcS) is sequestered. Has been modeled to induce curvature upon insertion into an otherwise flat hexagonal molecular layer of CcmK subunits. The protein is Carboxysome shell vertex protein CcmL of Synechocystis sp. (strain ATCC 27184 / PCC 6803 / Kazusa).